The primary structure comprises 161 residues: Lipoprotein signal peptidase (161 aa).

The next 3 helical transmembrane spans lie at 9 to 29, 63 to 83, and 88 to 108; these read ISLL…WLIT, KMLF…IFYI, and FNLF…GNFI. Residues D118 and D136 contribute to the active site. The chain crosses the membrane as a helical span at residues 131–151; the sequence is IFNIADSSLTIGVIFVIIALI.

It belongs to the peptidase A8 family.

It localises to the cell membrane. The enzyme catalyses Release of signal peptides from bacterial membrane prolipoproteins. Hydrolyzes -Xaa-Yaa-Zaa-|-(S,diacylglyceryl)Cys-, in which Xaa is hydrophobic (preferably Leu), and Yaa (Ala or Ser) and Zaa (Gly or Ala) have small, neutral side chains.. It functions in the pathway protein modification; lipoprotein biosynthesis (signal peptide cleavage). Functionally, this protein specifically catalyzes the removal of signal peptides from prolipoproteins. The polypeptide is Lipoprotein signal peptidase (Staphylococcus epidermidis (strain ATCC 12228 / FDA PCI 1200)).